A 758-amino-acid polypeptide reads, in one-letter code: Spastin (758 aa).

The disordered stretch occupies residues 1 to 99 (MVRTKNQSSS…PTTCSPRSGH (99 aa)). The Cytoplasmic segment spans residues 1–121 (MVRTKNQSSS…KQNLYVVSFP (121 aa)). Positions 1–210 (MVRTKNQSSS…RPIQPLEMAA (210 aa)) are required for localization to punctate cytoplasmic foci. Low complexity-rich tracts occupy residues 8-29 (SSSS…SATG), 43-58 (RSSS…AGGS), 66-76 (SSNRRSPGSSP), and 85-95 (TDDLTPTTCSP). Positions 122–142 (IIFLFNVLRSLIYQLFCIFRY) form an intramembrane region, helical. At 143-758 (LYGASTKVIY…WSQDYGDITI (616 aa)) the chain is on the cytoplasmic side. 2 stretches are compositionally biased toward polar residues: residues 169–180 (SKEQQQSLNHPS) and 189–198 (QEQQLSNQPQ). Residues 169 to 221 (SKEQQQSLNHPSELNRDSDGQEQQLSNQPQRFRPIQPLEMAANRPGGGYSPGP) are disordered. The sufficient for interaction with microtubules and microtubule severing stretch occupies residues 208–758 (MAANRPGGGY…WSQDYGDITI (551 aa)). In terms of domain architecture, MIT spans 233 to 308 (HRRAFEYISK…SMARDRLHFL (76 aa)). Disordered stretches follow at residues 353–376 (RVRS…GRKL) and 390–454 (NKSQ…ASTP). 2 stretches are compositionally biased toward polar residues: residues 390-406 (NKSQ…TSVG) and 425-454 (QFSS…ASTP). The segment at 443–455 (NNGPSGSGASTPV) is required for interaction with microtubules. 523–530 (GPPGNGKT) contacts ATP.

The protein belongs to the AAA ATPase family. Spastin subfamily. In terms of assembly, homohexamer. The homohexamer is stabilized by ATP-binding. The homohexamer may adopt a ring conformation through which microtubules pass prior to being severed. Interacts with microtubules. Interacts with atl; may be involved in microtubule dynamics.

The protein localises to the membrane. Its subcellular location is the cytoplasm. The protein resides in the cytoskeleton. It is found in the microtubule organizing center. It localises to the centrosome. The protein localises to the chromosome. Its subcellular location is the lipid droplet. The enzyme catalyses n ATP + n H2O + a microtubule = n ADP + n phosphate + (n+1) alpha/beta tubulin heterodimers.. ATP-dependent microtubule severing protein. Stimulates microtubule minus-end depolymerization and poleward microtubule flux in the mitotic spindle. Regulates microtubule stability in the neuromuscular junction synapse. Involved in lipid metabolism by regulating the size and distribution of lipid droplets. Involved in axon regeneration by regulating microtubule severing. This chain is Spastin, found in Drosophila yakuba (Fruit fly).